The following is a 262-amino-acid chain: Calbindin (262 aa).

Position 2 is an N-acetylthreonine (T2). EF-hand domains follow at residues I12–A47, D54–F89, K99–K134, K143–F178, and M187–K222. Ca(2+)-binding residues include D25, D27, N29, Y31, and E36. 14 residues coordinate Ca(2+): D112, D114, S116, E123, D156, N158, D160, K162, E167, D200, D202, N204, Y206, and E211.

Belongs to the calbindin family. As to expression, highly abundant in supporting cells. Also present in hair cells.

Its function is as follows. Buffers cytosolic calcium. May stimulate a membrane Ca(2+)-ATPase and a 3',5'-cyclic nucleotide phosphodiesterase. The sequence is that of Calbindin (CALB1) from Gallus gallus (Chicken).